Reading from the N-terminus, the 584-residue chain is High-affinity choline transporter 1 (584 aa).

The Extracellular segment spans residues 1 to 6 (MTVHID). A helical membrane pass occupies residues 7-27 (GIVAIVLFYLLILFVGLWAAW). Topologically, residues 28-50 (KSKNTSMEGAMDRSEAIMIGGRD) are cytoplasmic. The helical transmembrane segment at 51-71 (IGLLVGGFTMTATWVGGGYIN) threads the bilayer. Residues 72–83 (GTAEAVYVPGYG) lie on the Extracellular side of the membrane. A helical transmembrane segment spans residues 84-104 (LAWAQAPFGYALSLVIGGLFF). Topologically, residues 105–127 (AKPMRSRGYVTMLDPFQQMYGKR) are cytoplasmic. Residues 128 to 148 (MGGLLFIPALLGEIFWSAAIL) traverse the membrane as a helical segment. Over 149-166 (SALGATLSVIVDININVS) the chain is Extracellular. Residues 167-187 (VVVSAVIAVLYTLVGGLYSVA) form a helical membrane-spanning segment. The Cytoplasmic portion of the chain corresponds to 188 to 193 (YTDVVQ). Residues 194–214 (LFCIFLGLWISIPFALLNPAV) traverse the membrane as a helical segment. Over 215–239 (TDIIVTANQEVYQEPWVGNIQSKDS) the chain is Extracellular. A helical transmembrane segment spans residues 240–260 (LIWIDNFLLLMLGGIPWQVYF). The Cytoplasmic portion of the chain corresponds to 261 to 276 (QRVLSASSATYAQVLS). A helical membrane pass occupies residues 277–297 (FLAAFGCVLMAIPSVLIGAIG). The Extracellular portion of the chain corresponds to 298 to 319 (TSTDWNQTSYGLPGPIGKNETD). Asn303 carries an N-linked (GlcNAc...) asparagine glycan. The chain crosses the membrane as a helical span at residues 320–340 (MILPIVLQHLCPPYISFFGLG). Topologically, residues 341–378 (AVSAAVMSSADSSILSASSMFARNIYHLAFRQEASDKE) are cytoplasmic. Residues 379–399 (IVWVMRITIFLFGGAATSMAL) traverse the membrane as a helical segment. Residues 400-408 (LAQSIYGLW) are Extracellular-facing. A helical transmembrane segment spans residues 409-429 (YLSSDLVYVIIFPQLISVLFV). Residues 430–437 (KGTNTYGS) lie on the Cytoplasmic side of the membrane. Residues 438–458 (IAGYIIGFLLRISGGEPYLHM) form a helical membrane-spanning segment. Over 459–487 (QPFIYYPGCYLDHSFGDDPVYVQRFPFKT) the chain is Extracellular. A helical membrane pass occupies residues 488–508 (MAMLFSFLGNTGVSYLVKYLF). At 509-584 (VSGILPPKLD…NPELSKSGND (76 aa)) the chain is on the cytoplasmic side.

This sequence belongs to the sodium:solute symporter (SSF) (TC 2.A.21) family. In terms of processing, phosphorylated. In terms of tissue distribution, specific for cholinergic neurons.

It localises to the membrane. In terms of biological role, imports choline from the extracellular space to the neuron with high affinity. Rate-limiting step in acetylcholine synthesis. Sodium ion and chloride ion dependent. The sequence is that of High-affinity choline transporter 1 (CHT1) from Torpedo marmorata (Marbled electric ray).